A 277-amino-acid chain; its full sequence is Bis(5'-nucleosyl)-tetraphosphatase, symmetrical (277 aa).

The protein belongs to the Ap4A hydrolase family.

It catalyses the reaction P(1),P(4)-bis(5'-adenosyl) tetraphosphate + H2O = 2 ADP + 2 H(+). Hydrolyzes diadenosine 5',5'''-P1,P4-tetraphosphate to yield ADP. In Azotobacter vinelandii (strain DJ / ATCC BAA-1303), this protein is Bis(5'-nucleosyl)-tetraphosphatase, symmetrical.